The chain runs to 357 residues: Alanine racemase (357 aa).

Lys-34 serves as the catalytic Proton acceptor; specific for D-alanine. Position 34 is an N6-(pyridoxal phosphate)lysine (Lys-34). Substrate is bound at residue Arg-130. Tyr-253 acts as the Proton acceptor; specific for L-alanine in catalysis. Residue Met-301 coordinates substrate.

The protein belongs to the alanine racemase family. Pyridoxal 5'-phosphate is required as a cofactor.

It carries out the reaction L-alanine = D-alanine. The protein operates within amino-acid biosynthesis; D-alanine biosynthesis; D-alanine from L-alanine: step 1/1. Functionally, catalyzes the interconversion of L-alanine and D-alanine. May also act on other amino acids. The sequence is that of Alanine racemase (alr) from Mannheimia succiniciproducens (strain KCTC 0769BP / MBEL55E).